Consider the following 860-residue polypeptide: MRFKLHDVHIRRGLCCVADSYISPASINSGIRALIQKGEYLQALHLYSKHDGSSPFWTSVFTFPSLLKACSALTNLSYGKTIHGSVVVLGWRYDPFIATSLVNMYVKCGFLDYAVQVFDGWSQSQSGVSARDVTVWNSMIDGYFKFRRFKEGVGCFRRMLVFGVRPDAFSLSIVVSVMCKEGNFRREEGKQIHGFMLRNSLDTDSFLKTALIDMYFKFGLSIDAWRVFVEIEDKSNVVLWNVMIVGFGGSGICESSLDLYMLAKNNSVKLVSTSFTGALGACSQSENSGFGRQIHCDVVKMGLHNDPYVCTSLLSMYSKCGMVGEAETVFSCVVDKRLEIWNAMVAAYAENDYGYSALDLFGFMRQKSVLPDSFTLSNVISCCSVLGLYNYGKSVHAELFKRPIQSTSTIESALLTLYSKCGCDPDAYLVFKSMEEKDMVAWGSLISGLCKNGKFKEALKVFGDMKDDDDSLKPDSDIMTSVTNACAGLEALRFGLQVHGSMIKTGLVLNVFVGSSLIDLYSKCGLPEMALKVFTSMSTENMVAWNSMISCYSRNNLPELSIDLFNLMLSQGIFPDSVSITSVLVAISSTASLLKGKSLHGYTLRLGIPSDTHLKNALIDMYVKCGFSKYAENIFKKMQHKSLITWNLMIYGYGSHGDCITALSLFDEMKKAGESPDDVTFLSLISACNHSGFVEEGKNIFEFMKQDYGIEPNMEHYANMVDLLGRAGLLEEAYSFIKAMPIEADSSIWLCLLSASRTHHNVELGILSAEKLLRMEPERGSTYVQLINLYMEAGLKNEAAKLLGLMKEKGLHKQPGCSWIEVSDRTNVFFSGGSSSPMKAEIFNVLNRLKSNMVDEDKAT.

20 PPR repeats span residues 59–93 (SVFTFPSLLKACSALTNLSYGKTIHGSVVVLGWRY), 94–124 (DPFIATSLVNMYVKCGFLDYAVQVFDGWSQS), 132–166 (DVTVWNSMIDGYFKFRRFKEGVGCFRRMLVFGVRP), 167–203 (DAFSLSIVVSVMCKEGNFRREEGKQIHGFMLRNSLDT), 204–234 (DSFLKTALIDMYFKFGLSIDAWRVFVEIEDK), 236–270 (NVVLWNVMIVGFGGSGICESSLDLYMLAKNNSVKL), 271–305 (VSTSFTGALGACSQSENSGFGRQIHCDVVKMGLHN), 306–340 (DPYVCTSLLSMYSKCGMVGEAETVFSCVVDKRLEI), 341–371 (WNAMVAAYAENDYGYSALDLFGFMRQKSVLP), 372–406 (DSFTLSNVISCCSVLGLYNYGKSVHAELFKRPIQS), 407–437 (TSTIESALLTLYSKCGCDPDAYLVFKSMEEK), 438–472 (DMVAWGSLISGLCKNGKFKEALKVFGDMKDDDDSL), 475–509 (DSDIMTSVTNACAGLEALRFGLQVHGSMIKTGLVL), 510–540 (NVFVGSSLIDLYSKCGLPEMALKVFTSMSTE), 541–575 (NMVAWNSMISCYSRNNLPELSIDLFNLMLSQGIFP), 576–610 (DSVSITSVLVAISSTASLLKGKSLHGYTLRLGIPS), 611–641 (DTHLKNALIDMYVKCGFSKYAENIFKKMQHK), 642–676 (SLITWNLMIYGYGSHGDCITALSLFDEMKKAGESP), 677–707 (DDVTFLSLISACNHSGFVEEGKNIFEFMKQD), and 713–743 (NMEHYANMVDLLGRAGLLEEAYSFIKAMPIE). The interval 748-823 (IWLCLLSASR…QPGCSWIEVS (76 aa)) is type E motif. The segment at 824 to 854 (DRTNVFFSGGSSSPMKAEIFNVLNRLKSNMV) is type E(+) motif.

Belongs to the PPR family. PCMP-E subfamily.

This chain is Pentatricopeptide repeat-containing protein At2g40720 (PCMP-E26), found in Arabidopsis thaliana (Mouse-ear cress).